Reading from the N-terminus, the 463-residue chain is MGFMDFLAKMGENLPAVSKPKDKPTLTRKLLWTFIGLIVYLLMASIPLYGVTSSNSFLSNFLAQQIIFASSQGTLAQLGIGPVITSGLIMQILVGSKLINVDLTTQEGKSKFTQAEKALALIFIIVESSLFGYVFTRATSNILLPIIVVVQLIIASYIILLLDEMIQKGWGLGSGVSLFIMAGIMKVIFWNMFGIVSVQSQNLPVGFFPLLVSYITSGRNLQEIVLNTSSTTPYQPDLIGLIATVGLTILIVYLVNTNIYIPVTTQRLRGIRTTVPLNFLYVSSIPVIFVSVLGADIQLFASLANSISNSASGILTDIANAFFFPPQGVPHSVYALVVDPVGAAIYAAVFIVLSIVFGMLWIDVAGLDPKTQAEQMIRSGIEIPGMRTNPRIIEGILSKYIYALGFFSSLIVGLIAVVATFLGTYGTGVGLLLAITIAMQYYNLLAYERTLEMYPLLKRIVGE.

Over 1–20 (MGFMDFLAKMGENLPAVSKP) the chain is Cytoplasmic. The helical transmembrane segment at 21-47 (KDKPTLTRKLLWTFIGLIVYLLMASIP) threads the bilayer. Over 48 to 60 (LYGVTSSNSFLSN) the chain is Extracellular. An intramembrane region (helical) is located at residues 61–68 (FLAQQIIF). A discontinuously helical membrane pass occupies residues 61-89 (FLAQQIIFASSQGTLAQLGIGPVITSGLI). An intramembrane segment occupies 69-80 (ASSQGTLAQLGI). The segment at residues 81-89 (GPVITSGLI) is an intramembrane region (helical). At 90–110 (MQILVGSKLINVDLTTQEGKS) the chain is on the cytoplasmic side. A helical transmembrane segment spans residues 111–134 (KFTQAEKALALIFIIVESSLFGYV). The Extracellular segment spans residues 135-142 (FTRATSNI). The chain crosses the membrane as a helical span at residues 143 to 167 (LLPIIVVVQLIIASYIILLLDEMIQ). Residues 168–174 (KGWGLGS) are Cytoplasmic-facing. A helical membrane pass occupies residues 175–193 (GVSLFIMAGIMKVIFWNMF). Over 194 to 236 (GIVSVQSQNLPVGFFPLLVSYITSGRNLQEIVLNTSSTTPYQP) the chain is Extracellular. Residues 237–258 (DLIGLIATVGLTILIVYLVNTN) traverse the membrane as a helical segment. The Cytoplasmic segment spans residues 259–283 (IYIPVTTQRLRGIRTTVPLNFLYVS). The helical transmembrane segment at 284-305 (SIPVIFVSVLGADIQLFASLAN) threads the bilayer. Over 306 to 341 (SISNSASGILTDIANAFFFPPQGVPHSVYALVVDPV) the chain is Extracellular. A helical transmembrane segment spans residues 342–361 (GAAIYAAVFIVLSIVFGMLW). At 362 to 404 (IDVAGLDPKTQAEQMIRSGIEIPGMRTNPRIIEGILSKYIYAL) the chain is on the cytoplasmic side. The helical transmembrane segment at 405 to 423 (GFFSSLIVGLIAVVATFLG) threads the bilayer. At 424–426 (TYG) the chain is on the extracellular side. Residues 427-441 (TGVGLLLAITIAMQY) traverse the membrane as a helical segment. The Cytoplasmic segment spans residues 442-463 (YNLLAYERTLEMYPLLKRIVGE).

It belongs to the SecY/SEC61-alpha family. Component of the Sec protein translocase complex. Heterotrimer consisting of alpha (SecY), beta (SecG) and gamma (SecE) subunits. The heterotrimers can form oligomers, although 1 heterotrimer is thought to be able to translocate proteins. Interacts with the ribosome. May interact with SecDF, and other proteins may be involved.

It is found in the cell membrane. In terms of biological role, the central subunit of the protein translocation channel SecYEG. Consists of two halves formed by TMs 1-5 and 6-10. These two domains form a lateral gate at the front which open onto the bilayer between TMs 2 and 7, and are clamped together by SecE at the back. The channel is closed by both a pore ring composed of hydrophobic SecY resides and a short helix (helix 2A) on the extracellular side of the membrane which forms a plug. The plug probably moves laterally to allow the channel to open. The ring and the pore may move independently. In Sulfolobus acidocaldarius (strain ATCC 33909 / DSM 639 / JCM 8929 / NBRC 15157 / NCIMB 11770), this protein is Protein translocase subunit SecY.